The sequence spans 231 residues: MANKVLRKVTHCVFDMDGLLLDTERLYTVATEMILEPYGKTYPFEIKEQVMGLQTEPLARFMVEHYELPMSWEEYARQQRANTEILMRNAQLMPGAERLLRHLHANKVPFCLATSSGADMVELKTAQHRELFSLFNHKVCGSSDKEVVNGKPAPDIFLVAAGRFGVPPKPSDCLVFEDSPNGVTAANSAGMQVVMVPDPRLSQEKTSHATQVLASLADFKPEQFGLPAFTD.

Asp-15 functions as the Nucleophile in the catalytic mechanism. Positions 15 and 17 each coordinate Mg(2+). Asp-17 acts as the Proton donor in catalysis.

Belongs to the HAD-like hydrolase superfamily. CbbY/CbbZ/Gph/YieH family. Requires Mg(2+) as cofactor.

It carries out the reaction psi-UMP + H2O = pseudouridine + phosphate. In terms of biological role, dephosphorylates pseudouridine 5'-phosphate, a potential intermediate in rRNA degradation. The sequence is that of Probable pseudouridine-5'-phosphatase (Gs1l) from Drosophila melanogaster (Fruit fly).